The primary structure comprises 72 residues: Large ribosomal subunit protein bL28 (72 aa).

This sequence belongs to the bacterial ribosomal protein bL28 family.

This is Large ribosomal subunit protein bL28 from Chlorobium limicola (strain DSM 245 / NBRC 103803 / 6330).